The chain runs to 467 residues: Zinc finger and BTB domain-containing protein 43 (467 aa).

Met-1 carries the post-translational modification N-acetylmethionine. The BTB domain occupies 33–97 (CDVSIVVQGH…SYTGRLVMPA (65 aa)). Disordered regions lie at residues 134-153 (LNHG…GLVE) and 162-227 (HTDF…EFHY). The span at 140 to 149 (HQSPSSSNYN) shows a compositional bias: polar residues. 2 stretches are compositionally biased toward basic and acidic residues: residues 164–174 (DFPKAQELRDG) and 182–194 (KDEL…EHEY). Glycyl lysine isopeptide (Lys-Gly) (interchain with G-Cter in SUMO2) cross-links involve residues Lys-182, Lys-247, Lys-297, and Lys-358. The segment at 373–394 (YPCQCGKSFTHKSQRDRHMSMH) adopts a C2H2-type 1; atypical zinc-finger fold. Residues 400–422 (YGCSVCGKKFKMKHHLVGHMKIH) form a C2H2-type 2 zinc finger. Position 423 is a phosphothreonine (Thr-423). The C2H2-type 3; atypical zinc finger occupies 428 to 450 (YECNICAKRFMWRDSFHRHVTSC). Lys-458 participates in a covalent cross-link: Glycyl lysine isopeptide (Lys-Gly) (interchain with G-Cter in SUMO2).

The protein belongs to the krueppel C2H2-type zinc-finger protein family. Interacts with BDP1.

It is found in the nucleus. May be involved in transcriptional regulation. This chain is Zinc finger and BTB domain-containing protein 43 (Zbtb43), found in Mus musculus (Mouse).